A 276-amino-acid polypeptide reads, in one-letter code: MLLRFTKMHGLGNDFMVLDLVSQHAHILPKHAKQWGDRHTGIGFDQLLLVEAPNNPDVDFRYRIFNSDGSEVEQCGNGARCFARFVLDKRLTAKKQIRVETKGGIIELEIRSDGQISVDMGPPRLVPEEIPFQAAEQAKSYSLDVDGQTVELAAVSMGNPHAVLRVDDINNAPVHTLGPKIEHHPRFPARVNVGFLHVVDRQRAQLRVWERGAGETQACGTGACAAAVAAISQGWMDSPLLIDLPGGRLSIEWAGPGHPVMMTGPATRVYEGQVRL.

Substrate is bound by residues Asn13, Gln46, and Asn66. The active-site Proton donor is the Cys75. Substrate is bound by residues 76–77 (GN), Asn159, Asn192, and 210–211 (ER). The Proton acceptor role is filled by Cys219. Substrate is bound at residue 220 to 221 (GT).

The protein belongs to the diaminopimelate epimerase family. Homodimer.

The protein localises to the cytoplasm. The catalysed reaction is (2S,6S)-2,6-diaminopimelate = meso-2,6-diaminopimelate. The protein operates within amino-acid biosynthesis; L-lysine biosynthesis via DAP pathway; DL-2,6-diaminopimelate from LL-2,6-diaminopimelate: step 1/1. Catalyzes the stereoinversion of LL-2,6-diaminopimelate (L,L-DAP) to meso-diaminopimelate (meso-DAP), a precursor of L-lysine and an essential component of the bacterial peptidoglycan. This Pseudomonas syringae pv. tomato (strain ATCC BAA-871 / DC3000) protein is Diaminopimelate epimerase.